Reading from the N-terminus, the 424-residue chain is Glutamate-1-semialdehyde 2,1-aminomutase (424 aa).

The residue at position 266 (lysine 266) is an N6-(pyridoxal phosphate)lysine.

Belongs to the class-III pyridoxal-phosphate-dependent aminotransferase family. HemL subfamily. Homodimer. Pyridoxal 5'-phosphate is required as a cofactor.

It localises to the cytoplasm. It carries out the reaction (S)-4-amino-5-oxopentanoate = 5-aminolevulinate. Its pathway is porphyrin-containing compound metabolism; protoporphyrin-IX biosynthesis; 5-aminolevulinate from L-glutamyl-tRNA(Glu): step 2/2. In Thermus thermophilus (strain ATCC 27634 / DSM 579 / HB8), this protein is Glutamate-1-semialdehyde 2,1-aminomutase.